A 623-amino-acid polypeptide reads, in one-letter code: V-type proton ATPase catalytic subunit A (623 aa).

Gly252 to Thr259 contributes to the ATP binding site.

It belongs to the ATPase alpha/beta chains family. As to quaternary structure, V-ATPase is a heteromultimeric enzyme composed of a peripheral catalytic V1 complex (main components: subunits A, B, C, D, E, and F) attached to an integral membrane V0 proton pore complex (main component: the proteolipid protein).

The catalysed reaction is ATP + H2O + 4 H(+)(in) = ADP + phosphate + 5 H(+)(out). Functionally, catalytic subunit of the peripheral V1 complex of vacuolar ATPase. V-ATPase vacuolar ATPase is responsible for acidifying a variety of intracellular compartments in eukaryotic cells. In Vigna radiata var. radiata (Mung bean), this protein is V-type proton ATPase catalytic subunit A.